Here is a 446-residue protein sequence, read N- to C-terminus: MTKDKKHYICSNCGNTSPKWSGQCFDCGVWGSIVEEIVSTNKAIVKTGSKQDFDKLSGHVAEQLRIPTPIGELNRVLGGGLVLGSAILIGGDPGIGKSTLLLQLAASNFASKMNCLYITGEESLDQIKLRAIRLNLTNYNTDILAATNLEDIIASIEANKNNIDLVVIDSIQTITTKELSSPPGTVSQIRICANELVNYAKQNNIIILLSCHVTKDGQLAGPKILEHLVDTVLYFEGDHNNHFRILRSYKNRFGGVGEIGVFEMCGSGLIEVTNPSELFLMKREQNVIGTSIFAGIEGSRPLLMEVQALIVPSNMVTPRRSAVGWDANRLSMILAVLSSRIGLNLANYEVYLSIAGGLKIADPASDLAVAASLISAATGKPVPEHSVFFGEISLSGEIRKTAKAETRIKEAVKLGFNKIICSKLENLTYDFISSVSHLKDLKEIIR.

Residues 10 to 27 form a C4-type zinc finger; it reads CSNCGNTSPKWSGQCFDC. Position 91 to 98 (91 to 98) interacts with ATP; the sequence is GDPGIGKS. The short motif at 250-254 is the RadA KNRFG motif element; the sequence is KNRFG. Positions 349–446 are lon-protease-like; sequence EVYLSIAGGL…HLKDLKEIIR (98 aa).

This sequence belongs to the RecA family. RadA subfamily.

In terms of biological role, DNA-dependent ATPase involved in processing of recombination intermediates, plays a role in repairing DNA breaks. Stimulates the branch migration of RecA-mediated strand transfer reactions, allowing the 3' invading strand to extend heteroduplex DNA faster. Binds ssDNA in the presence of ADP but not other nucleotides, has ATPase activity that is stimulated by ssDNA and various branched DNA structures, but inhibited by SSB. Does not have RecA's homology-searching function. This chain is DNA repair protein RadA, found in Rickettsia felis (strain ATCC VR-1525 / URRWXCal2) (Rickettsia azadi).